The sequence spans 88 residues: MGSIATNPEGITNPPIDELLEKTTSKYALVIFAAKRARQVNAYYSQLGEGLLEYVGPLVETTPQEKPLSIAMREINGGLLTAEPTDQP.

The protein belongs to the RNA polymerase subunit omega family. In terms of assembly, the RNAP catalytic core consists of 2 alpha, 1 beta, 1 beta' and 1 omega subunit. When a sigma factor is associated with the core the holoenzyme is formed, which can initiate transcription.

The catalysed reaction is RNA(n) + a ribonucleoside 5'-triphosphate = RNA(n+1) + diphosphate. Functionally, promotes RNA polymerase assembly. Latches the N- and C-terminal regions of the beta' subunit thereby facilitating its interaction with the beta and alpha subunits. This Salinispora tropica (strain ATCC BAA-916 / DSM 44818 / JCM 13857 / NBRC 105044 / CNB-440) protein is DNA-directed RNA polymerase subunit omega.